The following is a 136-amino-acid chain: MTSLTRPRVEFISTILQTVLNMGLLSLGLILVVFLGKETVHLADVLFAPEQTSKYELVEGLVVYFLYFEFIALIVKYFQSGFHFPLRYFVYIGITAIVRLIIVDHKSPLDVLIYSAAILLLVITLWLCNSKRLKRE.

4 helical membrane-spanning segments follow: residues 15–35 (ILQTVLNMGLLSLGLILVVFL), 55–75 (YELVEGLVVYFLYFEFIALIV), 82–102 (FHFPLRYFVYIGITAIVRLII), and 108–128 (PLDVLIYSAAILLLVITLWLC).

It belongs to the PsiE family.

Its subcellular location is the cell inner membrane. The chain is Protein PsiE homolog from Enterobacter sp. (strain 638).